A 191-amino-acid chain; its full sequence is MGKKLVMAQKRGETRALCLGVAMVVCAAITYYILGTTVLPLYQKSVWTQESTCHLVETNIKDQEELEGRKVPQYPCLWVNVSAVGRWAMLYHTEDTRDQNQQCSYIPRNLDNYQTALVDVKKVRANFYKHHNFYCFSAPQVNETSVVYQRLYGPQILLFSFFWPTFLLTGGLLIIAMVKLNRSLSVLAAQK.

At 1 to 18 (MGKKLVMAQKRGETRALC) the chain is on the cytoplasmic side. The chain crosses the membrane as a helical span at residues 19–39 (LGVAMVVCAAITYYILGTTVL). The Extracellular segment spans residues 40–155 (PLYQKSVWTQ…VVYQRLYGPQ (116 aa)). N-linked (GlcNAc...) asparagine glycosylation is found at Asn80 and Asn142. The helical transmembrane segment at 156–176 (ILLFSFFWPTFLLTGGLLIIA) threads the bilayer. Over 177-191 (MVKLNRSLSVLAAQK) the chain is Cytoplasmic.

The protein belongs to the KCNMB (TC 8.A.14.1) family. KCNMB1 subfamily. As to quaternary structure, interacts with KCNMA1 tetramer. There are probably 4 molecules of KCMNB1 per KCNMA1 tetramer. In terms of processing, N-glycosylated. Weakly expressed. In brain, it is expressed in a few discrete populations of neurons that also express KCNMA1.

The protein localises to the membrane. In terms of biological role, regulatory subunit of the calcium activated potassium KCNMA1 (maxiK) channel. Modulates the calcium sensitivity and gating kinetics of KCNMA1, thereby contributing to KCNMA1 channel diversity. Increases the apparent Ca(2+)/voltage sensitivity of the KCNMA1 channel. It also modifies KCNMA1 channel kinetics and alters its pharmacological properties. It slows down the activation and the deactivation kinetics of the channel. Acts as a negative regulator of smooth muscle contraction by enhancing the calcium sensitivity to KCNMA1. Its presence is also a requirement for internal binding of the KCNMA1 channel opener dehydrosoyasaponin I (DHS-1) triterpene glycoside and for external binding of the agonist hormone 17-beta-estradiol (E2). Increases the binding activity of charybdotoxin (CTX) toxin to KCNMA1 peptide blocker by increasing the CTX association rate and decreasing the dissociation rate. The polypeptide is Calcium-activated potassium channel subunit beta-1 (Kcnmb1) (Rattus norvegicus (Rat)).